The chain runs to 235 residues: Uridylate kinase (235 aa).

9 to 12 (KLSG) contacts ATP. UMP is bound at residue G51. Residues G52 and R56 each coordinate ATP. UMP-binding positions include D71 and 132–139 (TGNPYFTT). 3 residues coordinate ATP: T159, Y165, and D168.

The protein belongs to the UMP kinase family. As to quaternary structure, homohexamer.

The protein localises to the cytoplasm. The catalysed reaction is UMP + ATP = UDP + ADP. It participates in pyrimidine metabolism; CTP biosynthesis via de novo pathway; UDP from UMP (UMPK route): step 1/1. Its activity is regulated as follows. Inhibited by UTP. Functionally, catalyzes the reversible phosphorylation of UMP to UDP. The chain is Uridylate kinase from Flavobacterium psychrophilum (strain ATCC 49511 / DSM 21280 / CIP 103535 / JIP02/86).